Consider the following 408-residue polypeptide: Putative transporter AmpG 2 (408 aa).

Transmembrane regions (helical) follow at residues 11 to 31 (IFNILFILIISFPGGLIYLLT), 49 to 69 (IGLFGLVNFIYILKFLWGPLL), 84 to 104 (YCLVITLINCIVCVYVLTSFN), 110 to 130 (TPFVLCLIVLAFFSSIYDMLI), 154 to 174 (FRIGILISGSGALYLSTIISW), 177 to 197 (VYRTMAILCIPSLLLIIFYPL), 224 to 244 (WIVIISFMLLYRLQDSFLSIM), 261 to 281 (IGYKAFGMCAAIFGGVIGGFL), 294 to 311 (VLIYHALSSLSFIYLYFL), 315 to 337 (IISLYIAVFCQEFTKGLTMSPFF), 353 to 373 (IALITSITNVGTILIGSISGY), and 382 to 402 (YFFIVAGLCFIPAYILILYLP).

Belongs to the major facilitator superfamily.

It is found in the cell inner membrane. The polypeptide is Putative transporter AmpG 2 (ampG2) (Rickettsia typhi (strain ATCC VR-144 / Wilmington)).